We begin with the raw amino-acid sequence, 380 residues long: UDP-N-acetylglucosamine 2-epimerase (380 aa).

Belongs to the UDP-N-acetylglucosamine 2-epimerase family.

The protein localises to the cytoplasm. It catalyses the reaction UDP-N-acetyl-alpha-D-glucosamine = UDP-N-acetyl-alpha-D-mannosamine. It participates in cell wall biogenesis; poly(glycerol phosphate) teichoic acid biosynthesis. Functionally, catalyzes the conversion of UDP-N-acetylglucosamine into UDP-N-acetylmannosamine, a precursor of the teichoic acid linkage unit. This is UDP-N-acetylglucosamine 2-epimerase (mnaA) from Bacillus subtilis (strain 168).